A 285-amino-acid polypeptide reads, in one-letter code: MKSSTTIITAYFDIGRGDWTANKGFREKLARSVDVYFSYFERLAALENEMIIFTSPDLKPRVEAIRNGKPTTVIVIDIKKKFRYIRSRIEKIQKDESFTNRLEPRQLKNPEYWSPEYVLVCNLKAYFVNKAINMGLVKTPLVAWIDFGYCHKPNVTRGLKIWDFPFDESKMHLFTIKKGLTVTSQQQVFDFMIGNHVYIIGGAIVGSQHKWKEFYKLVLESQKITLNNNIVDDDQGIFVMCYYKRPDLFNLNYLGRGKWFDLFRCFRSNTLGAKMQALRIFLSRK.

The chain is Protein HtrL from Escherichia coli (strain K12).